The sequence spans 369 residues: Anhydro-N-acetylmuramic acid kinase (369 aa).

Residue 12-19 participates in ATP binding; it reads GTSMDGVD.

It belongs to the anhydro-N-acetylmuramic acid kinase family.

It carries out the reaction 1,6-anhydro-N-acetyl-beta-muramate + ATP + H2O = N-acetyl-D-muramate 6-phosphate + ADP + H(+). It participates in amino-sugar metabolism; 1,6-anhydro-N-acetylmuramate degradation. It functions in the pathway cell wall biogenesis; peptidoglycan recycling. Functionally, catalyzes the specific phosphorylation of 1,6-anhydro-N-acetylmuramic acid (anhMurNAc) with the simultaneous cleavage of the 1,6-anhydro ring, generating MurNAc-6-P. Is required for the utilization of anhMurNAc either imported from the medium or derived from its own cell wall murein, and thus plays a role in cell wall recycling. The polypeptide is Anhydro-N-acetylmuramic acid kinase (Shewanella putrefaciens (strain CN-32 / ATCC BAA-453)).